A 216-amino-acid polypeptide reads, in one-letter code: Probable GTP-binding protein EngB (216 aa).

One can recognise an EngB-type G domain in the interval 37–214 (GSVEIAFAGR…RAAMIRLLDE (178 aa)). GTP is bound by residues 45-52 (GRSNVGKS), 72-76 (GRTQE), 92-95 (DMPG), 159-162 (TKAD), and 193-195 (TSS). Mg(2+)-binding residues include Ser52 and Thr74.

It belongs to the TRAFAC class TrmE-Era-EngA-EngB-Septin-like GTPase superfamily. EngB GTPase family. Mg(2+) is required as a cofactor.

In terms of biological role, necessary for normal cell division and for the maintenance of normal septation. This Rhodopseudomonas palustris (strain TIE-1) protein is Probable GTP-binding protein EngB.